Here is a 792-residue protein sequence, read N- to C-terminus: Phenylalanine--tRNA ligase beta subunit (792 aa).

In terms of domain architecture, tRNA-binding spans 39 to 150 (GDEITNVVTG…ENTPIGKDIK (112 aa)). The 76-residue stretch at 404 to 479 (SEPNIVEVDY…RIYGYNKVPS (76 aa)) folds into the B5 domain. Aspartate 457, aspartate 463, glutamate 466, and glutamate 467 together coordinate Mg(2+). Residues 699–792 (PKFPTVTRDI…LEHVLGAELR (94 aa)) form the FDX-ACB domain.

Belongs to the phenylalanyl-tRNA synthetase beta subunit family. Type 1 subfamily. As to quaternary structure, tetramer of two alpha and two beta subunits. Requires Mg(2+) as cofactor.

Its subcellular location is the cytoplasm. The catalysed reaction is tRNA(Phe) + L-phenylalanine + ATP = L-phenylalanyl-tRNA(Phe) + AMP + diphosphate + H(+). The sequence is that of Phenylalanine--tRNA ligase beta subunit from Clostridium acetobutylicum (strain ATCC 824 / DSM 792 / JCM 1419 / IAM 19013 / LMG 5710 / NBRC 13948 / NRRL B-527 / VKM B-1787 / 2291 / W).